The sequence spans 259 residues: Protein unc-50 homolog (259 aa).

Positions 1-15 (MLPTSSPQIHRNGSL) are enriched in polar residues. The tract at residues 1–22 (MLPTSSPQIHRNGSLSERDAAR) is disordered. Over 1 to 80 (MLPTSSPQIH…TKDQWARDDP (80 aa)) the chain is Cytoplasmic. Residues 81–101 (AFLVLLSIWLCVSTVGFGLVL) traverse the membrane as a helical segment. Over 102 to 110 (DMGFVETLT) the chain is Lumenal. The helical transmembrane segment at 111–131 (LLLWVVFIDCIGVGLLISTLM) threads the bilayer. Residues 132–162 (WFVTNKYLMKHPNRDYDVEWGYAFDVHLNAF) lie on the Cytoplasmic side of the membrane. A helical membrane pass occupies residues 163-183 (YPLLVILHFLQLFFINHVVVI). Topologically, residues 184–198 (SSDWFLGYFVGNTMW) are lumenal. A helical membrane pass occupies residues 199–219 (LIAIGYYVYITFLGYSALPFL). Topologically, residues 220-222 (KNT) are cytoplasmic. The chain crosses the membrane as a helical span at residues 223-243 (VVLLYPFALLGLLYVLSISLG). The Lumenal portion of the chain corresponds to 244–259 (WNFTKGLCWFYKHRVQ).

This sequence belongs to the unc-50 family.

The protein resides in the nucleus inner membrane. It is found in the golgi apparatus membrane. Involved in the cell surface expression of neuronal nicotinic receptors. Binds RNA. The protein is Protein unc-50 homolog (unc50) of Danio rerio (Zebrafish).